The chain runs to 456 residues: tRNA modification GTPase MnmE (456 aa).

The (6S)-5-formyl-5,6,7,8-tetrahydrofolate site is built by R23, E85, and R124. The TrmE-type G domain occupies 220 to 376; the sequence is GVAVLIAGKP…LKESIFQTFI (157 aa). N230 contributes to the K(+) binding site. Residues 230–235, 249–255, and 274–277 each bind GTP; these read NVGKSS, TSVPGTT, and DTAG. S234 contributes to the Mg(2+) binding site. K(+)-binding residues include T249, V251, and T254. Position 255 (T255) interacts with Mg(2+). K456 serves as a coordination point for (6S)-5-formyl-5,6,7,8-tetrahydrofolate.

It belongs to the TRAFAC class TrmE-Era-EngA-EngB-Septin-like GTPase superfamily. TrmE GTPase family. Homodimer. Heterotetramer of two MnmE and two MnmG subunits. It depends on K(+) as a cofactor.

The protein resides in the cytoplasm. Its function is as follows. Exhibits a very high intrinsic GTPase hydrolysis rate. Involved in the addition of a carboxymethylaminomethyl (cmnm) group at the wobble position (U34) of certain tRNAs, forming tRNA-cmnm(5)s(2)U34. This Geobacter sulfurreducens (strain ATCC 51573 / DSM 12127 / PCA) protein is tRNA modification GTPase MnmE.